Reading from the N-terminus, the 470-residue chain is Maltose fermentation regulatory protein YPR196W (470 aa).

The segment at residues 8-34 (CDCCRVRRVKCDRNRPCDRCRQRNLRC) is a DNA-binding region (zn(2)-C6 fungal-type). Positions 41-49 (RKRGPKSIG) match the Nuclear localization signal motif.

Belongs to the MAL13 family.

It is found in the nucleus. Its function is as follows. May regulate the transcription of maltase and maltose permease genes. The chain is Maltose fermentation regulatory protein YPR196W from Saccharomyces cerevisiae (strain ATCC 204508 / S288c) (Baker's yeast).